Reading from the N-terminus, the 179-residue chain is ATP synthase subunit delta (179 aa).

The protein belongs to the ATPase delta chain family. As to quaternary structure, F-type ATPases have 2 components, F(1) - the catalytic core - and F(0) - the membrane proton channel. F(1) has five subunits: alpha(3), beta(3), gamma(1), delta(1), epsilon(1). F(0) has three main subunits: a(1), b(2) and c(10-14). The alpha and beta chains form an alternating ring which encloses part of the gamma chain. F(1) is attached to F(0) by a central stalk formed by the gamma and epsilon chains, while a peripheral stalk is formed by the delta and b chains.

The protein localises to the cell membrane. Its function is as follows. F(1)F(0) ATP synthase produces ATP from ADP in the presence of a proton or sodium gradient. F-type ATPases consist of two structural domains, F(1) containing the extramembraneous catalytic core and F(0) containing the membrane proton channel, linked together by a central stalk and a peripheral stalk. During catalysis, ATP synthesis in the catalytic domain of F(1) is coupled via a rotary mechanism of the central stalk subunits to proton translocation. Functionally, this protein is part of the stalk that links CF(0) to CF(1). It either transmits conformational changes from CF(0) to CF(1) or is implicated in proton conduction. The polypeptide is ATP synthase subunit delta (Ureaplasma parvum serovar 3 (strain ATCC 27815 / 27 / NCTC 11736)).